Consider the following 705-residue polypeptide: Choline transporter-like protein 2 (705 aa).

Residues 1–33 (MGKDSQHYYGKHGTPQKYDPTFKGPIYNRGCTD) are Cytoplasmic-facing. At T14 the chain carries Phosphothreonine. Residues 34-54 (IICCVLLFLAIVGYVAVGIIA) traverse the membrane as a helical segment. The Extracellular portion of the chain corresponds to 55–232 (WTHGDPRKVI…QIFEDYTVSW (178 aa)). N-linked (GlcNAc...) asparagine glycosylation is found at N187 and N200. Residues 233 to 253 (YWIVIGLVIAMLLSLMFIVLL) form a helical membrane-spanning segment. Topologically, residues 254 to 256 (RFL) are cytoplasmic. Residues 257-277 (AGVMVWVMIVMVILVLGYGIF) form a helical membrane-spanning segment. At 278–315 (HCYAEYSRLRGEAGSDVSLVDLGFQTDLRVYLHLRQTW) the chain is on the extracellular side. Residues 316–336 (MAFMIILSILEVVIILLLIFL) traverse the membrane as a helical segment. The Cytoplasmic portion of the chain corresponds to 337–364 (RKRILIAIALIKEASRAVGHVMCSMLYP). Residues 365 to 385 (LVTFFLLCLCIAYWASTSVFL) traverse the membrane as a helical segment. At 386–453 (STSNVAVYKI…LQIFNAFMFF (68 aa)) the chain is on the extracellular side. N-linked (GlcNAc...) asparagine glycosylation occurs at N416. Residues 454–476 (WLANFVLALGQVTLAGAFASYYW) form a helical membrane-spanning segment. Residues 477–503 (AMRKPDDMPAFPLFSAFGRALRYHTGS) are Cytoplasmic-facing. The chain crosses the membrane as a helical span at residues 504-524 (LAFGSLILAIVQIIRVMLEYL). Residues 525–562 (DQRLKAAQNKFAKFLMVCLKCCFWCLEKFIKFLNRNAY) are Extracellular-facing. The helical transmembrane segment at 563-583 (IMIAIYGTNFCTSARNAFFLL) threads the bilayer. Residues 584 to 598 (MRNIIRVAVLDKVTD) are Cytoplasmic-facing. A helical membrane pass occupies residues 599–619 (FLFLLGKLLIVGSVGILAFFF). Residues 620-637 (FTHRIRIVQDTAPPLNYY) lie on the Extracellular side of the membrane. A helical transmembrane segment spans residues 638–658 (WVPILTVIIGSYLIAHGFFSV). Residues 659 to 705 (YGMCVDTLFLCFLEDLERNDGSAERPYFMSSTLKKLLNKTNKKVAES) lie on the Cytoplasmic side of the membrane.

This sequence belongs to the CTL (choline transporter-like) family. Interacts with COCH. In terms of processing, N-glycosylated.

The protein localises to the cell membrane. It localises to the mitochondrion outer membrane. It carries out the reaction choline(out) + n H(+)(in) = choline(in) + n H(+)(out). The enzyme catalyses ethanolamine(out) + n H(+)(in) = ethanolamine(in) + n H(+)(out). Functionally, exhibits choline transporter activity, as choline/H+ antiporter. Also acts as a low-affinity ethanolamine/H+ antiporter, regulating the supply of extracellular ethanolamine (Etn) for the CDP-Etn pathway, redistribute intracellular Etn and balance the CDP-Cho and CDP-Etn arms of the Kennedy pathway. The protein is Choline transporter-like protein 2 (Slc44a2) of Rattus norvegicus (Rat).